The primary structure comprises 519 residues: LysM domain-containing protein ARB_03442 (519 aa).

The first 19 residues, 1–19 (MGQLKQLAGILALASPAIA), serve as a signal peptide directing secretion. Residue asparagine 47 is glycosylated (N-linked (GlcNAc...) asparagine). One can recognise a LysM domain in the interval 312-358 (KYYNVVAGDTCASISSEFEVTMDELLTYNPELHPNCENLWANFAICV). Residues 314 to 358 (YNVVAGDTCASISSEFEVTMDELLTYNPELHPNCENLWANFAICV) form a lysM domain region. Over residues 407–416 (PDAPDAQGQT) the composition is skewed to low complexity. A disordered region spans residues 407–458 (PDAPDAQGQTVHDDEPPEEPHIEEPPKDIPAGDDDDRKKAKLPLPSGKYPLP). The span at 417-433 (VHDDEPPEEPHIEEPPK) shows a compositional bias: basic and acidic residues. An N-linked (GlcNAc...) asparagine glycan is attached at asparagine 460. A Chitin-binding type-1 domain is found at 467-510 (DGSCNEYISCVGSPFGVCCSTSGWCGYGKPWCGVGNCVSGYCDT). 4 cysteine pairs are disulfide-bonded: cysteine 470–cysteine 485, cysteine 476–cysteine 491, cysteine 484–cysteine 498, and cysteine 503–cysteine 508.

It localises to the secreted. Might have a role in sequestration of chitin oligosaccharides (breakdown products of fungal cell walls that are released during invasion and act as triggers of host immunity) to dampen host defense. The polypeptide is LysM domain-containing protein ARB_03442 (Arthroderma benhamiae (strain ATCC MYA-4681 / CBS 112371) (Trichophyton mentagrophytes)).